Here is a 354-residue protein sequence, read N- to C-terminus: 3-dehydroquinate synthase (354 aa).

NAD(+) is bound by residues 100–104, 124–125, lysine 136, lysine 145, and 163–166; these read GATGD, TT, and FLAT. 3 residues coordinate Zn(2+): glutamate 178, histidine 242, and histidine 256.

It belongs to the sugar phosphate cyclases superfamily. Dehydroquinate synthase family. The cofactor is Co(2+). Requires Zn(2+) as cofactor. NAD(+) is required as a cofactor.

Its subcellular location is the cytoplasm. The enzyme catalyses 7-phospho-2-dehydro-3-deoxy-D-arabino-heptonate = 3-dehydroquinate + phosphate. It functions in the pathway metabolic intermediate biosynthesis; chorismate biosynthesis; chorismate from D-erythrose 4-phosphate and phosphoenolpyruvate: step 2/7. Its function is as follows. Catalyzes the conversion of 3-deoxy-D-arabino-heptulosonate 7-phosphate (DAHP) to dehydroquinate (DHQ). This Staphylococcus haemolyticus (strain JCSC1435) protein is 3-dehydroquinate synthase.